Here is a 489-residue protein sequence, read N- to C-terminus: Glycogen synthase (489 aa).

R20 contributes to the ADP-alpha-D-glucose binding site.

It belongs to the glycosyltransferase 1 family. Bacterial/plant glycogen synthase subfamily.

The enzyme catalyses [(1-&gt;4)-alpha-D-glucosyl](n) + ADP-alpha-D-glucose = [(1-&gt;4)-alpha-D-glucosyl](n+1) + ADP + H(+). It functions in the pathway glycan biosynthesis; glycogen biosynthesis. Its function is as follows. Synthesizes alpha-1,4-glucan chains using ADP-glucose. This chain is Glycogen synthase, found in Chlorobium chlorochromatii (strain CaD3).